A 494-amino-acid chain; its full sequence is Probable malate:quinone oxidoreductase (494 aa).

This sequence belongs to the MQO family. It depends on FAD as a cofactor.

The enzyme catalyses (S)-malate + a quinone = a quinol + oxaloacetate. Its pathway is carbohydrate metabolism; tricarboxylic acid cycle; oxaloacetate from (S)-malate (quinone route): step 1/1. In Micrococcus luteus (strain ATCC 4698 / DSM 20030 / JCM 1464 / CCM 169 / CCUG 5858 / IAM 1056 / NBRC 3333 / NCIMB 9278 / NCTC 2665 / VKM Ac-2230) (Micrococcus lysodeikticus), this protein is Probable malate:quinone oxidoreductase.